We begin with the raw amino-acid sequence, 582 residues long: Arginine--tRNA ligase (582 aa).

A 'HIGH' region motif is present at residues 128–138 (PNLAKEMHVGH).

The protein belongs to the class-I aminoacyl-tRNA synthetase family. Monomer.

Its subcellular location is the cytoplasm. The catalysed reaction is tRNA(Arg) + L-arginine + ATP = L-arginyl-tRNA(Arg) + AMP + diphosphate. This is Arginine--tRNA ligase from Colwellia psychrerythraea (strain 34H / ATCC BAA-681) (Vibrio psychroerythus).